The sequence spans 406 residues: uncharacterized protein (406 aa).

The protein localises to the plastid. The protein resides in the chloroplast. This is an uncharacterized protein from Euglena gracilis.